A 225-amino-acid polypeptide reads, in one-letter code: MAGVRFGVVVFPGSNCDRDVAWVTRGLLGCPTRLIWHRETDLSELDVVVLPGGFSYGDYLRCGAIARFAPVMGSLKEHAARGGYVLGICNGFQILTEAGLLPGALVRNANLHFICDRVGIRVERQDLPWTSAYPQGSTLTLPIAHGEGRYTCDPDTLKQLQDRGQIVFRYAPVAPNGSVDNIAGICDPSGRILGLMPHPERAADPDLPGQDGIPFWQSILRSFAA.

In terms of domain architecture, Glutamine amidotransferase type-1 spans 6 to 225; that stretch reads FGVVVFPGSN…WQSILRSFAA (220 aa). C89 functions as the Nucleophile in the catalytic mechanism. Active-site residues include H198 and E200.

In terms of assembly, part of the FGAM synthase complex composed of 1 PurL, 1 PurQ and 2 PurS subunits.

Its subcellular location is the cytoplasm. The catalysed reaction is N(2)-formyl-N(1)-(5-phospho-beta-D-ribosyl)glycinamide + L-glutamine + ATP + H2O = 2-formamido-N(1)-(5-O-phospho-beta-D-ribosyl)acetamidine + L-glutamate + ADP + phosphate + H(+). It catalyses the reaction L-glutamine + H2O = L-glutamate + NH4(+). The protein operates within purine metabolism; IMP biosynthesis via de novo pathway; 5-amino-1-(5-phospho-D-ribosyl)imidazole from N(2)-formyl-N(1)-(5-phospho-D-ribosyl)glycinamide: step 1/2. Its function is as follows. Part of the phosphoribosylformylglycinamidine synthase complex involved in the purines biosynthetic pathway. Catalyzes the ATP-dependent conversion of formylglycinamide ribonucleotide (FGAR) and glutamine to yield formylglycinamidine ribonucleotide (FGAM) and glutamate. The FGAM synthase complex is composed of three subunits. PurQ produces an ammonia molecule by converting glutamine to glutamate. PurL transfers the ammonia molecule to FGAR to form FGAM in an ATP-dependent manner. PurS interacts with PurQ and PurL and is thought to assist in the transfer of the ammonia molecule from PurQ to PurL. The sequence is that of Phosphoribosylformylglycinamidine synthase subunit PurQ from Synechococcus sp. (strain JA-2-3B'a(2-13)) (Cyanobacteria bacterium Yellowstone B-Prime).